The chain runs to 998 residues: Calcium-transporting ATPase 3, endoplasmic reticulum-type (998 aa).

Residues 1-48 are Cytoplasmic-facing; it reads MEDAYARSVSEVLDFFGVDPTKGLSDSQVVHHSRLYGRNVLPEEKRTP. Residues 49–69 traverse the membrane as a helical segment; it reads FWKLVLKQFDDLLVKILIVAA. Residues 70-89 are Lumenal-facing; it reads IVSFVLALANGETGLTAFLE. A helical membrane pass occupies residues 90 to 109; that stretch reads PFVILLILAANAAVGVITET. Residues 110–250 are Cytoplasmic-facing; that stretch reads NAEKALEELR…DEATPLKKKL (141 aa). A helical transmembrane segment spans residues 251–270; it reads DEFGSFLAKVIAGICVLVWV. Residues 271–291 lie on the Lumenal side of the membrane; that stretch reads VNIGHFSDPSHGGFFKGAIHY. The helical transmembrane segment at 292–309 threads the bilayer; the sequence is FKIAVALAVAAIPEGLPA. Residues valine 300, alanine 301, isoleucine 303, and glutamate 305 each coordinate Ca(2+). Residues 310–746 lie on the Cytoplasmic side of the membrane; that stretch reads VVTTCLALGT…AEGRAIYNNT (437 aa). Residue aspartate 347 is the 4-aspartylphosphate intermediate of the active site. The Mg(2+) site is built by aspartate 692 and aspartate 696. The chain crosses the membrane as a helical span at residues 747 to 766; the sequence is KQFIRYMISSNIGEVVCIFV. Ca(2+) contacts are provided by asparagine 757 and glutamate 760. The Lumenal portion of the chain corresponds to 767 to 776; it reads AAVLGIPDTL. The helical transmembrane segment at 777–797 threads the bilayer; that stretch reads APVQLLWVNLVTDGLPATAIG. Ca(2+)-binding residues include asparagine 785, threonine 788, and aspartate 789. At 798–817 the chain is on the cytoplasmic side; sequence FNKQDSDVMKAKPRKVGEAV. Residues 818–840 form a helical membrane-spanning segment; the sequence is VTGWLFFRYLVIGVYVGLATVAG. The Lumenal portion of the chain corresponds to 841–883; the sequence is FIWWFVYSDGGPKLTYSELMNFETCALRETTYPCSIFEDRHPS. A helical membrane pass occupies residues 884 to 903; that stretch reads TVAMTVLVVVEMFNALNNLS. Residue glutamate 894 participates in Ca(2+) binding. The Cytoplasmic portion of the chain corresponds to 904 to 916; the sequence is ENQSLLVITPRSN. A helical transmembrane segment spans residues 917 to 935; sequence LWLVGSIILTMLLHVLILY. Topologically, residues 936–950 are lumenal; sequence VHPLAVLFSVTPLSW. A helical transmembrane segment spans residues 951-971; that stretch reads AEWTAVLYLSFPVIIIDELLK. The Cytoplasmic segment spans residues 972–998; sequence FLSRNTGMRFRFRLRKADLLPKDRRDK.

It belongs to the cation transport ATPase (P-type) (TC 3.A.3) family. Type IIA subfamily. As to expression, expressed in root cap, in elongation and differentiation zones of roots, in vascular tissues of roots, leaves, floral pedicels and style, in leaves, including hydathodes and guard cells, in stamens, in petals, in sepals and in siliques.

It is found in the golgi apparatus membrane. Its subcellular location is the endosome membrane. The protein localises to the prevacuolar compartment membrane. The catalysed reaction is Ca(2+)(in) + ATP + H2O = Ca(2+)(out) + ADP + phosphate + H(+). Functionally, this magnesium-dependent enzyme catalyzes the hydrolysis of ATP coupled with the translocation of calcium from the cytosol to an endomembrane compartment. Involved in calcium-enhanced root growth, in tolerance to toxic levels of manganese and in secretory processes. Has a crucial role in manganese nutrition, but is not involved in transporting copper, iron or zinc. In Arabidopsis thaliana (Mouse-ear cress), this protein is Calcium-transporting ATPase 3, endoplasmic reticulum-type.